Here is a 208-residue protein sequence, read N- to C-terminus: Small ribosomal subunit protein uS4 (208 aa).

Positions 95-157 (RRIDNVVYRA…DSLKKLIRSN (63 aa)) constitute an S4 RNA-binding domain.

It belongs to the universal ribosomal protein uS4 family. As to quaternary structure, part of the 30S ribosomal subunit. Contacts protein S5. The interaction surface between S4 and S5 is involved in control of translational fidelity.

Its function is as follows. One of the primary rRNA binding proteins, it binds directly to 16S rRNA where it nucleates assembly of the body of the 30S subunit. In terms of biological role, with S5 and S12 plays an important role in translational accuracy. The chain is Small ribosomal subunit protein uS4 from Borreliella burgdorferi (strain ATCC 35210 / DSM 4680 / CIP 102532 / B31) (Borrelia burgdorferi).